Reading from the N-terminus, the 264-residue chain is LIMR family protein SELMODRAFT_416716 (264 aa).

4 helical membrane-spanning segments follow: residues 23–43 (VVIL…VIGY), 96–116 (ILFT…LIFA), 194–214 (IIWL…FPFL), and 225–245 (WGLL…MSVI).

The protein belongs to the LIMR family.

The protein localises to the membrane. In Selaginella moellendorffii (Spikemoss), this protein is LIMR family protein SELMODRAFT_416716.